Here is a 247-residue protein sequence, read N- to C-terminus: E3 SUMO-protein ligase NSE2 (247 aa).

Methionine 1 bears the N-acetylmethionine mark. Glycyl lysine isopeptide (Lys-Gly) (interchain with G-Cter in SUMO2) cross-links involve residues lysine 90 and lysine 107. Position 116 is a phosphoserine (serine 116). Glycyl lysine isopeptide (Lys-Gly) (interchain with G-Cter in SUMO2) cross-links involve residues lysine 125 and lysine 130. The segment at 154–240 (VDEDIIVTQS…LRRAIENHNK (87 aa)) adopts an SP-RING-type zinc-finger fold. The Zn(2+) site is built by cysteine 185, histidine 187, cysteine 210, and cysteine 215.

Belongs to the NSE2 family. As to quaternary structure, component of the SMC5-SMC6 complex which consists at least of SMC5, SMC6, NSMCE2, NSMCE1, NSMCE4A or EID3 and NSMCE3. Post-translationally, sumoylated, possibly via autosumoylation.

It localises to the nucleus. The protein resides in the chromosome. It is found in the telomere. Its subcellular location is the PML body. The protein operates within protein modification; protein sumoylation. Its function is as follows. E3 SUMO-protein ligase component of the SMC5-SMC6 complex, a complex involved in DNA double-strand break repair by homologous recombination. Is not be required for the stability of the complex. The complex may promote sister chromatid homologous recombination by recruiting the SMC1-SMC3 cohesin complex to double-strand breaks. The complex is required for telomere maintenance via recombination in ALT (alternative lengthening of telomeres) cell lines and mediates sumoylation of shelterin complex (telosome) components which is proposed to lead to shelterin complex disassembly in ALT-associated PML bodies (APBs). Acts as an E3 ligase mediating SUMO attachment to various proteins such as SMC6L1 and TSNAX, the shelterin complex subunits TERF1, TERF2, TINF2 and TERF2IP, RAD51AP1, and maybe the cohesin components RAD21 and STAG2. Required for recruitment of telomeres to PML nuclear bodies. SUMO protein-ligase activity is required for the prevention of DNA damage-induced apoptosis by facilitating DNA repair, and for formation of APBs in ALT cell lines. Required for sister chromatid cohesion during prometaphase and mitotic progression. The sequence is that of E3 SUMO-protein ligase NSE2 (NSMCE2) from Homo sapiens (Human).